The chain runs to 865 residues: Alanine--tRNA ligase (865 aa).

Zn(2+) contacts are provided by H568, H572, C670, and H674.

This sequence belongs to the class-II aminoacyl-tRNA synthetase family. The cofactor is Zn(2+).

Its subcellular location is the cytoplasm. It carries out the reaction tRNA(Ala) + L-alanine + ATP = L-alanyl-tRNA(Ala) + AMP + diphosphate. Functionally, catalyzes the attachment of alanine to tRNA(Ala) in a two-step reaction: alanine is first activated by ATP to form Ala-AMP and then transferred to the acceptor end of tRNA(Ala). Also edits incorrectly charged Ser-tRNA(Ala) and Gly-tRNA(Ala) via its editing domain. The sequence is that of Alanine--tRNA ligase from Vibrio campbellii (strain ATCC BAA-1116).